The chain runs to 130 residues: Arsenate reductase 2.2 (130 aa).

The 102-residue stretch at 18-119 folds into the Rhodanese domain; that stretch reads RDPRIAVVDV…WELSGRPVCR (102 aa). The active-site Cysteine persulfide intermediate is Cys-70.

The enzyme catalyses [glutaredoxin]-dithiol + arsenate + glutathione + H(+) = glutathionyl-S-S-[glutaredoxin] + arsenite + H2O. In terms of biological role, possesses arsenate reductase activity in vitro. Catalyzes the reduction of arsenate [As(V)] to arsenite [As(III)]. May play a role in arsenic retention in roots. Functionally, possesses phosphatase activity towards p-nitrophenyl phosphate in vitro. This chain is Arsenate reductase 2.2 (ACR2.2), found in Oryza sativa subsp. japonica (Rice).